The chain runs to 406 residues: Elongation factor Ts, mitochondrial (406 aa).

The interval 387–406 (ARPSDETSFADQVKEAAGLA) is disordered.

This sequence belongs to the EF-Ts family.

It localises to the mitochondrion. Functionally, associates with the EF-Tu.GDP complex and induces the exchange of GDP to GTP. It remains bound to the aminoacyl-tRNA.EF-Tu.GTP complex up to the GTP hydrolysis stage on the ribosome. The protein is Elongation factor Ts, mitochondrial of Malassezia globosa (strain ATCC MYA-4612 / CBS 7966) (Dandruff-associated fungus).